The primary structure comprises 244 residues: PF03932 family protein CutC (244 aa).

This sequence belongs to the CutC family.

The protein resides in the cytoplasm. The polypeptide is PF03932 family protein CutC (Pasteurella multocida (strain Pm70)).